Reading from the N-terminus, the 613-residue chain is Ribosome-associated molecular chaperone SSB2 (613 aa).

Ala2 is modified (N-acetylalanine). The segment at 2–391 (AEGVFQGAIG…ILTGQSTSDE (390 aa)) is nucleotide binding domain (NBD). 16-18 (TTY) is an ATP binding site. The residue at position 47 (Thr47) is a Phosphothreonine. ATP is bound by residues Lys73, 205–207 (GGT), 271–278 (ERAKRTLS), and Gly342. The tract at residues 392-402 (TKDLLLLDVAP) is inter-domain linker. Residues 403 to 613 (LSLGVGMQGD…RVVTKAMSSR (211 aa)) are substrate binding domain (SBD). Positions 428-430 (KRR) match the Contributes to ribosome binding motif. Residue Thr431 is modified to Phosphothreonine. Residues 516–612 (SEEIEKMVNQ…KRVVTKAMSS (97 aa)) form a lid domain (SBDalpha) region. The short motif at 574 to 582 (IEAALSDAL) is the Nuclear export signal element. The required for interaction with ribosomes stretch occupies residues 601–613 (GLKRVVTKAMSSR).

This sequence belongs to the heat shock protein 70 family. Ssb-type Hsp70 subfamily. In terms of assembly, binds to ribosomes. Binds close to the ribosomal tunnel exit via contacts with both ribosomal proteins RPL35, RPL39 and RPL19, and rRNA. Directly interacts with nascent polypeptides. This interaction is dependent on the ribosome-associated complex (RAC). Interacts with SSE1.

It is found in the cytoplasm. The enzyme catalyses ATP + H2O = ADP + phosphate + H(+). Functionally, ribosome-bound, Hsp70-type chaperone that assists in the cotranslational folding of newly synthesized proteins in the cytosol. Stimulates folding by interacting with nascent chains, binding to short, largely hydrophobic sequences exposed by unfolded proteins, thereby stabilizing longer, more slowly translated, and aggregation-prone nascent polypeptides and domains that cannot fold stably until fully synthesized. The Hsp70-protein substrate interaction depends on ATP-binding and on allosteric regulation between the NBD and the SBD. The ATP-bound state is characterized by a fast exchange rate of substrate (low affinity state), while in the ADP-bound state exchange is much slower (high affinity state). During the Hsp70 cycle, the chaperone switches between the ATP-bound state (open conformation) and the ADP-bound state (closed conformation) by major conformational rearrangements involving mainly the lid domain. Ssb cooperates with a specific Hsp40/Hsp70 co-chaperone termed the ribosome-associated complex (RAC), which stimulates the ATPase activity of the ribosome-associated pool of Ssbs and switches it to the high affinity substrate binding state. Hsp110 chaperone SSE1 and FES1 act as nucleotide exchange factors that cause substrate release. The chain is Ribosome-associated molecular chaperone SSB2 from Saccharomyces cerevisiae (strain ATCC 204508 / S288c) (Baker's yeast).